The primary structure comprises 92 residues: Small ribosomal subunit protein bS20 (92 aa).

The segment at 1–24 (MANSAQARKRARQAAKANSHNSAL) is disordered.

The protein belongs to the bacterial ribosomal protein bS20 family.

Its function is as follows. Binds directly to 16S ribosomal RNA. The sequence is that of Small ribosomal subunit protein bS20 from Paraburkholderia xenovorans (strain LB400).